The primary structure comprises 101 residues: Small ribosomal subunit protein uS14 (101 aa).

The protein belongs to the universal ribosomal protein uS14 family. Part of the 30S ribosomal subunit. Contacts proteins S3 and S10.

In terms of biological role, binds 16S rRNA, required for the assembly of 30S particles and may also be responsible for determining the conformation of the 16S rRNA at the A site. The chain is Small ribosomal subunit protein uS14 from Shewanella loihica (strain ATCC BAA-1088 / PV-4).